Reading from the N-terminus, the 219-residue chain is Large ribosomal subunit protein uL3 (219 aa).

The protein belongs to the universal ribosomal protein uL3 family. Part of the 50S ribosomal subunit. Forms a cluster with proteins L14 and L19.

Functionally, one of the primary rRNA binding proteins, it binds directly near the 3'-end of the 23S rRNA, where it nucleates assembly of the 50S subunit. The polypeptide is Large ribosomal subunit protein uL3 (Chlamydia pneumoniae (Chlamydophila pneumoniae)).